The chain runs to 101 residues: NADH-quinone oxidoreductase subunit K (101 aa).

Helical transmembrane passes span Leu-4 to Val-24, Ile-29 to Ala-49, and Ile-61 to Leu-81.

The protein belongs to the complex I subunit 4L family. In terms of assembly, NDH-1 is composed of 14 different subunits. Subunits NuoA, H, J, K, L, M, N constitute the membrane sector of the complex.

The protein localises to the cell inner membrane. It carries out the reaction a quinone + NADH + 5 H(+)(in) = a quinol + NAD(+) + 4 H(+)(out). Functionally, NDH-1 shuttles electrons from NADH, via FMN and iron-sulfur (Fe-S) centers, to quinones in the respiratory chain. The immediate electron acceptor for the enzyme in this species is believed to be ubiquinone. Couples the redox reaction to proton translocation (for every two electrons transferred, four hydrogen ions are translocated across the cytoplasmic membrane), and thus conserves the redox energy in a proton gradient. The polypeptide is NADH-quinone oxidoreductase subunit K (Ruthia magnifica subsp. Calyptogena magnifica).